The sequence spans 205 residues: GTP cyclohydrolase-2 (205 aa).

49 to 53 provides a ligand contact to GTP; sequence RIHSE. Residues Cys-54, Cys-65, and Cys-67 each coordinate Zn(2+). Residues Gln-70, 92-94, and Thr-114 contribute to the GTP site; that span reads EGR. The active-site Proton acceptor is the Asp-126. Arg-128 functions as the Nucleophile in the catalytic mechanism. The GTP site is built by Thr-149 and Lys-154.

It belongs to the GTP cyclohydrolase II family. Zn(2+) is required as a cofactor.

It catalyses the reaction GTP + 4 H2O = 2,5-diamino-6-hydroxy-4-(5-phosphoribosylamino)-pyrimidine + formate + 2 phosphate + 3 H(+). It functions in the pathway cofactor biosynthesis; riboflavin biosynthesis; 5-amino-6-(D-ribitylamino)uracil from GTP: step 1/4. Its function is as follows. Catalyzes the conversion of GTP to 2,5-diamino-6-ribosylamino-4(3H)-pyrimidinone 5'-phosphate (DARP), formate and pyrophosphate. In Shewanella sediminis (strain HAW-EB3), this protein is GTP cyclohydrolase-2.